Consider the following 61-residue polypeptide: MDPNCSCPTSGSCSCAGSCTCKACRCPSCKKSCCSCCPVGCAKCAQGCVCKGASDKCSCCA.

Residues 1 to 29 (MDPNCSCPTSGSCSCAGSCTCKACRCPSC) are beta. Cysteine 5, cysteine 7, cysteine 13, cysteine 15, cysteine 19, cysteine 21, cysteine 24, cysteine 26, cysteine 29, cysteine 33, cysteine 34, cysteine 36, cysteine 37, cysteine 41, cysteine 44, cysteine 48, cysteine 50, cysteine 57, cysteine 59, and cysteine 60 together coordinate a divalent metal cation. Residues 30–61 (KKSCCSCCPVGCAKCAQGCVCKGASDKCSCCA) form an alpha region.

It belongs to the metallothionein superfamily. Type 1 family.

Its function is as follows. Metallothioneins have a high content of cysteine residues that bind various heavy metals; these proteins are transcriptionally regulated by both heavy metals and glucocorticoids. The protein is Metallothionein-1B (MT1B) of Ovis aries (Sheep).